The following is a 329-amino-acid chain: MKPKRFALTPGEPAGIGPDLCLLLATQPQPYPLIAITSRDLLTQRAAQLGVAVSLLDVTPETLPDQPAPAGSLYVWHTPLAAPVETGVLNKANAAFVLQTLTRAGQGCLDGLFSGMITAPVHKGVINDGGIAFSGHTEFLAELTHTEQVVMMLATGDLRVALVTTHLPLREVADAITADRLERVTRILHADLVNKFGIAHPRILVCGLNPHAGESGHLGREEIDIIEPTLERLRSEGLDLRGPLPADTLFTPKYLEHCDAVLAMYHDQGLPVLKYKGFGAAVNVTLGLPIIRTSVDHGTALDLAGSANIDTGSLRVALQTAYQMAETHS.

Substrate contacts are provided by H136 and T137. Residues H166, H211, and H266 each coordinate a divalent metal cation. Substrate contacts are provided by K274, N283, and R292.

Belongs to the PdxA family. As to quaternary structure, homodimer. Zn(2+) is required as a cofactor. It depends on Mg(2+) as a cofactor. The cofactor is Co(2+).

Its subcellular location is the cytoplasm. It catalyses the reaction 4-(phosphooxy)-L-threonine + NAD(+) = 3-amino-2-oxopropyl phosphate + CO2 + NADH. It functions in the pathway cofactor biosynthesis; pyridoxine 5'-phosphate biosynthesis; pyridoxine 5'-phosphate from D-erythrose 4-phosphate: step 4/5. Catalyzes the NAD(P)-dependent oxidation of 4-(phosphooxy)-L-threonine (HTP) into 2-amino-3-oxo-4-(phosphooxy)butyric acid which spontaneously decarboxylates to form 3-amino-2-oxopropyl phosphate (AHAP). This chain is 4-hydroxythreonine-4-phosphate dehydrogenase, found in Pseudomonas syringae pv. tomato (strain ATCC BAA-871 / DC3000).